The primary structure comprises 171 residues: uncharacterized protein (171 aa).

This sequence belongs to the mimivirus R24/R907 family.

This is an uncharacterized protein from Acanthamoeba polyphaga (Amoeba).